A 326-amino-acid polypeptide reads, in one-letter code: Protein-arginine N-acetylglucosaminyltransferase NleB2 (326 aa).

UDP-N-acetyl-alpha-D-glucosamine contacts are provided by residues 45–47 (QWF), Tyr69, and 216–219 (YLDM). A DXD motif motif is present at residues 218–220 (DMD). Mn(2+) is bound at residue Asp220. Glu250 (proton acceptor) is an active-site residue. Mn(2+)-binding residues include Asn317 and Ser319. UDP-N-acetyl-alpha-D-glucosamine contacts are provided by residues Ser319 and 324-326 (SSW).

The protein belongs to the glycosyltransferase NleB family. The cofactor is Mn(2+).

Its subcellular location is the secreted. It is found in the host cell. It carries out the reaction L-arginyl-[protein] + UDP-N-acetyl-alpha-D-glucosamine = N(omega)-(N-acetyl-beta-D-glucosaminyl)-L-arginyl-[protein] + UDP + H(+). Its function is as follows. Protein-arginine N-acetylglucosaminyltransferase effector that catalyzes the transfer of a single N-acetylglucosamine (GlcNAc) to a conserved arginine residue of host target proteins. In contrast to NleB1, not able to disrupt TNF signaling in infected cells. Shows a lower enzymatic activity than NleB1. This is Protein-arginine N-acetylglucosaminyltransferase NleB2 from Escherichia coli O127:H6 (strain E2348/69 / EPEC).